The following is a 440-amino-acid chain: tRNA-2-methylthio-N(6)-dimethylallyladenosine synthase (440 aa).

Residues 4–120 (NYVYIETFGC…LNDMVLAAER (117 aa)) form the MTTase N-terminal domain. [4Fe-4S] cluster-binding residues include cysteine 13, cysteine 49, cysteine 83, cysteine 158, cysteine 162, and cysteine 165. Residues 144–374 (GTARISSFVT…QALQKRTTME (231 aa)) enclose the Radical SAM core domain. Residues 377–439 (DVLLGTRQTV…QNSLLGELLP (63 aa)) enclose the TRAM domain.

Belongs to the methylthiotransferase family. MiaB subfamily. In terms of assembly, monomer. [4Fe-4S] cluster serves as cofactor.

It is found in the cytoplasm. The catalysed reaction is N(6)-dimethylallyladenosine(37) in tRNA + (sulfur carrier)-SH + AH2 + 2 S-adenosyl-L-methionine = 2-methylsulfanyl-N(6)-dimethylallyladenosine(37) in tRNA + (sulfur carrier)-H + 5'-deoxyadenosine + L-methionine + A + S-adenosyl-L-homocysteine + 2 H(+). In terms of biological role, catalyzes the methylthiolation of N6-(dimethylallyl)adenosine (i(6)A), leading to the formation of 2-methylthio-N6-(dimethylallyl)adenosine (ms(2)i(6)A) at position 37 in tRNAs that read codons beginning with uridine. This is tRNA-2-methylthio-N(6)-dimethylallyladenosine synthase from Pelobacter propionicus (strain DSM 2379 / NBRC 103807 / OttBd1).